The sequence spans 507 residues: Flagellar hook-associated protein 1 (507 aa).

It belongs to the flagella basal body rod proteins family.

It is found in the secreted. The protein resides in the bacterial flagellum. This Bacillus subtilis (strain 168) protein is Flagellar hook-associated protein 1 (flgK).